The sequence spans 308 residues: MVTYVSALFYGFGGIVVAGVALLVAFQEKLVYVPVLPGLSKSYPITPARLNLIYEDIWLQSSDGVRLHAWFIKMFPECRGPTILFFQENAGNIAHRLEMVRIMIQKLKCNVFMLSYRGYGASEGYPSQQGIIKDAQAALDHLSGRTDIDTSRIVVFGRSLGGAVGAVLTKNNPDKVSALILENTFTSILDMAGVLLPFLKWFIGGSGTKSLKLLNFVVRSPWKTIDAIAEIKQPVLFLSGLQDEMVPPFHMKMLYAKAAARNPQCTFVEFPSGMHMDTWLSGGEVYWKTNLQFLEKYAPEKRKEDTGR.

The chain crosses the membrane as a helical span at residues 6–26; sequence SALFYGFGGIVVAGVALLVAF. Residues Ser-159, Asp-243, and Arg-308 each act as charge relay system in the active site.

This sequence belongs to the serine esterase family. As to expression, expressed in roots, rosette leaves, stems and flowers.

The protein localises to the cell membrane. Its function is as follows. Involved in the regulation of root growth. Involved in the suppression of the root bending in response to touch stimuli, gravity and light. Negatively regulates stimulus-induced root bending through inhibition of root tip rotation. This is Alpha/beta hydrolase domain-containing protein WAV2 from Arabidopsis thaliana (Mouse-ear cress).